Consider the following 427-residue polypeptide: Dihydroorotase (427 aa).

2 residues coordinate Zn(2+): H58 and H60. Residues 60-62 (HYR) and N92 contribute to the substrate site. D150, H177, and H230 together coordinate Zn(2+). A substrate-binding site is contributed by N276. D303 lines the Zn(2+) pocket. D303 is a catalytic residue. Substrate is bound by residues H307 and 321–322 (FG).

Belongs to the metallo-dependent hydrolases superfamily. DHOase family. Class I DHOase subfamily. Zn(2+) serves as cofactor.

It catalyses the reaction (S)-dihydroorotate + H2O = N-carbamoyl-L-aspartate + H(+). The protein operates within pyrimidine metabolism; UMP biosynthesis via de novo pathway; (S)-dihydroorotate from bicarbonate: step 3/3. Functionally, catalyzes the reversible cyclization of carbamoyl aspartate to dihydroorotate. The chain is Dihydroorotase from Lactobacillus leichmannii.